A 162-amino-acid polypeptide reads, in one-letter code: RNA pyrophosphohydrolase (162 aa).

The region spanning 11–155 (PYRPCVGIVL…KRAVYEEVVA (145 aa)) is the Nudix hydrolase domain. A Nudix box motif is present at residues 45–66 (GGIDEGEKPREAALRELWEETG).

This sequence belongs to the Nudix hydrolase family. RppH subfamily. A divalent metal cation is required as a cofactor.

In terms of biological role, accelerates the degradation of transcripts by removing pyrophosphate from the 5'-end of triphosphorylated RNA, leading to a more labile monophosphorylated state that can stimulate subsequent ribonuclease cleavage. This chain is RNA pyrophosphohydrolase, found in Cereibacter sphaeroides (strain ATCC 17023 / DSM 158 / JCM 6121 / CCUG 31486 / LMG 2827 / NBRC 12203 / NCIMB 8253 / ATH 2.4.1.) (Rhodobacter sphaeroides).